We begin with the raw amino-acid sequence, 384 residues long: MSEQLVTPENVTTKDGKINLLDLNRQQMREFFKDLGEKPFRADQVMKWMYHYCCDNFDEMTDINKVLRGKLKEVAEIRAPEVVEEQRSSDGTIKWAIAVGDQRVETVYIPEDDRATLCVSSQVGCALECKFCSTAQQGFNRNLRVSEIIGQVWRAAKIVGAAKVTGQRPITNVVMMGMGEPLLNLNNVVPAMEIMLDDFGFGLSKRRVTLSTSGVVPALDKLGDMIDVALAISLHAPNDEIRDEIVPINKKYNIETFLAAVRRYLEKSNANQGRVTIEYVMLDHVNDGTEHAHQLAELLKDTPCKINLIPWNPFPGAPYGRSSNSRIDRFSKVLMSYGFTTIVRKTRGDDIDAACGQLAGDVIDRTKRTLRKRMQGEAIDVRSV.

Glu-105 acts as the Proton acceptor in catalysis. A Radical SAM core domain is found at 111 to 350 (EDDRATLCVS…TIVRKTRGDD (240 aa)). A disulfide bridge connects residues Cys-118 and Cys-355. Residues Cys-125, Cys-129, and Cys-132 each coordinate [4Fe-4S] cluster. S-adenosyl-L-methionine contacts are provided by residues 179-180 (GE), Ser-211, 233-235 (SLH), and Asn-312. The S-methylcysteine intermediate role is filled by Cys-355.

It belongs to the radical SAM superfamily. RlmN family. The cofactor is [4Fe-4S] cluster.

Its subcellular location is the cytoplasm. The enzyme catalyses adenosine(2503) in 23S rRNA + 2 reduced [2Fe-2S]-[ferredoxin] + 2 S-adenosyl-L-methionine = 2-methyladenosine(2503) in 23S rRNA + 5'-deoxyadenosine + L-methionine + 2 oxidized [2Fe-2S]-[ferredoxin] + S-adenosyl-L-homocysteine. The catalysed reaction is adenosine(37) in tRNA + 2 reduced [2Fe-2S]-[ferredoxin] + 2 S-adenosyl-L-methionine = 2-methyladenosine(37) in tRNA + 5'-deoxyadenosine + L-methionine + 2 oxidized [2Fe-2S]-[ferredoxin] + S-adenosyl-L-homocysteine. Its function is as follows. Specifically methylates position 2 of adenine 2503 in 23S rRNA and position 2 of adenine 37 in tRNAs. m2A2503 modification seems to play a crucial role in the proofreading step occurring at the peptidyl transferase center and thus would serve to optimize ribosomal fidelity. The chain is Dual-specificity RNA methyltransferase RlmN from Escherichia fergusonii (strain ATCC 35469 / DSM 13698 / CCUG 18766 / IAM 14443 / JCM 21226 / LMG 7866 / NBRC 102419 / NCTC 12128 / CDC 0568-73).